The following is a 267-amino-acid chain: Ribosomal RNA large subunit methyltransferase E (267 aa).

Residues G50, W52, D68, D84, and D109 each contribute to the S-adenosyl-L-methionine site. Residue K149 is the Proton acceptor of the active site. Residues 196 to 255 (PLKIDDKFDVTIKKIGAKGNGIAFVEDFVVFMQDEVKKGENVRIKIVDVKPEFAFAIVIG) enclose the TRAM domain.

The protein belongs to the class I-like SAM-binding methyltransferase superfamily. RNA methyltransferase RlmE family.

The protein resides in the cytoplasm. It catalyses the reaction uridine(2552) in 23S rRNA + S-adenosyl-L-methionine = 2'-O-methyluridine(2552) in 23S rRNA + S-adenosyl-L-homocysteine + H(+). In terms of biological role, specifically methylates the uridine in position 2552 of 23S rRNA at the 2'-O position of the ribose in the fully assembled 50S ribosomal subunit. In Methanococcoides burtonii (strain DSM 6242 / NBRC 107633 / OCM 468 / ACE-M), this protein is Ribosomal RNA large subunit methyltransferase E.